The sequence spans 920 residues: DNA ligase (920 aa).

Residues 90–94 (DAAYD), 139–140 (SL), and E173 each bind NAD(+). K175 serves as the catalytic N6-AMP-lysine intermediate. NAD(+)-binding residues include R196, E235, K360, and K384. Positions 481, 484, 500, and 506 each coordinate Zn(2+). The tract at residues 662–691 (GEAAIESAETQGDTASETTGAPTGAEAPLG) is disordered. The segment covering 669–682 (AETQGDTASETTGA) has biased composition (polar residues). A BRCT domain is found at 839–920 (SLPQTLAGKT…FAQLLATGTI (82 aa)).

Belongs to the NAD-dependent DNA ligase family. LigA subfamily. Mg(2+) is required as a cofactor. Mn(2+) serves as cofactor.

The catalysed reaction is NAD(+) + (deoxyribonucleotide)n-3'-hydroxyl + 5'-phospho-(deoxyribonucleotide)m = (deoxyribonucleotide)n+m + AMP + beta-nicotinamide D-nucleotide.. Functionally, DNA ligase that catalyzes the formation of phosphodiester linkages between 5'-phosphoryl and 3'-hydroxyl groups in double-stranded DNA using NAD as a coenzyme and as the energy source for the reaction. It is essential for DNA replication and repair of damaged DNA. In Bifidobacterium longum (strain DJO10A), this protein is DNA ligase.